A 199-amino-acid chain; its full sequence is Outer-membrane lipoprotein LolB (199 aa).

Positions 1-28 (MAAAGSLCQTAWRVRGWLAAGLCALLAG) are cleaved as a signal peptide. A lipid anchor (N-palmitoyl cysteine) is attached at C29. C29 is lipidated: S-diacylglycerol cysteine.

It belongs to the LolB family. In terms of assembly, monomer.

It localises to the cell outer membrane. Its function is as follows. Plays a critical role in the incorporation of lipoproteins in the outer membrane after they are released by the LolA protein. The sequence is that of Outer-membrane lipoprotein LolB from Bordetella petrii (strain ATCC BAA-461 / DSM 12804 / CCUG 43448).